The following is a 191-amino-acid chain: Thymidylate kinase (191 aa).

Residue Gly7–Ser14 coordinates ATP.

Belongs to the thymidylate kinase family.

The enzyme catalyses dTMP + ATP = dTDP + ADP. In terms of biological role, phosphorylation of dTMP to form dTDP in both de novo and salvage pathways of dTTP synthesis. This chain is Thymidylate kinase, found in Sulfurovum sp. (strain NBC37-1).